Here is a 340-residue protein sequence, read N- to C-terminus: L-threonine 3-dehydrogenase (340 aa).

A Zn(2+)-binding site is contributed by Cys38. Residues Thr40 and His43 each act as charge relay system in the active site. Zn(2+) is bound by residues His63, Glu64, Cys93, Cys96, Cys99, and Cys107. NAD(+)-binding positions include Ile175, Asp195, Arg200, 261-263, and 285-286; these read LGI and IY.

This sequence belongs to the zinc-containing alcohol dehydrogenase family. As to quaternary structure, homotetramer. It depends on Zn(2+) as a cofactor.

Its subcellular location is the cytoplasm. The catalysed reaction is L-threonine + NAD(+) = (2S)-2-amino-3-oxobutanoate + NADH + H(+). It participates in amino-acid degradation; L-threonine degradation via oxydo-reductase pathway; glycine from L-threonine: step 1/2. In terms of biological role, catalyzes the NAD(+)-dependent oxidation of L-threonine to 2-amino-3-ketobutyrate. This Xanthomonas euvesicatoria pv. vesicatoria (strain 85-10) (Xanthomonas campestris pv. vesicatoria) protein is L-threonine 3-dehydrogenase.